The following is a 194-amino-acid chain: Peptidyl-tRNA hydrolase (194 aa).

Position 17 (Tyr-17) interacts with tRNA. The Proton acceptor role is filled by His-22. 3 residues coordinate tRNA: Tyr-68, Asn-70, and Asn-116.

It belongs to the PTH family. As to quaternary structure, monomer.

The protein localises to the cytoplasm. The catalysed reaction is an N-acyl-L-alpha-aminoacyl-tRNA + H2O = an N-acyl-L-amino acid + a tRNA + H(+). Its function is as follows. Hydrolyzes ribosome-free peptidyl-tRNAs (with 1 or more amino acids incorporated), which drop off the ribosome during protein synthesis, or as a result of ribosome stalling. In terms of biological role, catalyzes the release of premature peptidyl moieties from peptidyl-tRNA molecules trapped in stalled 50S ribosomal subunits, and thus maintains levels of free tRNAs and 50S ribosomes. This is Peptidyl-tRNA hydrolase from Marinomonas sp. (strain MWYL1).